Here is a 430-residue protein sequence, read N- to C-terminus: Adenylosuccinate synthetase (430 aa).

GTP-binding positions include 12–18 (GDEGKGK) and 40–42 (GHT). D13 functions as the Proton acceptor in the catalytic mechanism. Mg(2+) is bound by residues D13 and G40. IMP contacts are provided by residues 13 to 16 (DEGK), 38 to 41 (NAGH), T128, R142, Q223, T238, and R302. The active-site Proton donor is H41. 298-304 (VNTGRKR) contributes to the substrate binding site. GTP-binding positions include R304, 330–332 (KLD), and 412–414 (GVG).

Belongs to the adenylosuccinate synthetase family. Homodimer. Requires Mg(2+) as cofactor.

The protein resides in the cytoplasm. It catalyses the reaction IMP + L-aspartate + GTP = N(6)-(1,2-dicarboxyethyl)-AMP + GDP + phosphate + 2 H(+). It participates in purine metabolism; AMP biosynthesis via de novo pathway; AMP from IMP: step 1/2. Plays an important role in the de novo pathway of purine nucleotide biosynthesis. Catalyzes the first committed step in the biosynthesis of AMP from IMP. The sequence is that of Adenylosuccinate synthetase from Corynebacterium glutamicum (strain ATCC 13032 / DSM 20300 / JCM 1318 / BCRC 11384 / CCUG 27702 / LMG 3730 / NBRC 12168 / NCIMB 10025 / NRRL B-2784 / 534).